Reading from the N-terminus, the 324-residue chain is uncharacterized protein (324 aa).

Residues 1–11 (MNTNINVNGSN) are compositionally biased toward polar residues. Disordered stretches follow at residues 1–77 (MNTN…YSYS), 132–194 (NNHY…NNNN), and 272–324 (DENI…DNDS). Positions 21 to 64 (NENNNNNNGRNNNTNNNNNGRYNNNNNNNNNNNNNNYNLNMNST) are enriched in low complexity. The segment covering 279-324 (SNNNNNNNNNNNNSYNVNICRNNSNFNVNENNGGDNNNDNNNDNDS) has biased composition (low complexity).

This is an uncharacterized protein from Dictyostelium discoideum (Social amoeba).